The primary structure comprises 309 residues: Taste receptor type 2 member 31 (309 aa).

Over 1-2 (MT) the chain is Extracellular. A helical transmembrane segment spans residues 3–23 (TFIPIIFSSVVVVLFVIGNFA). At 24–55 (NGFIALVNSIERVKRQKISFADQILTALAVSR) the chain is on the cytoplasmic side. The chain crosses the membrane as a helical span at residues 56–76 (VGLLWVLLLNWYSTVFNPAFY). The Extracellular portion of the chain corresponds to 77 to 100 (SVEVRTTAYNVWAVTGHFSNWLAT). Residues 101–121 (SLSIFYLLKIANFSNLIFLHL) traverse the membrane as a helical segment. Topologically, residues 122-126 (KRRVK) are cytoplasmic. Residues 127 to 147 (SVILVMLLGPLLFLACQLFVI) form a helical membrane-spanning segment. Topologically, residues 148 to 181 (NMKEIVRTKEYEGNLTWKIKLRSAVYLSDATVTT) are extracellular. Asn161 carries N-linked (GlcNAc...) asparagine glycosylation. The helical transmembrane segment at 182 to 202 (LGNLVPFTLTLLCFLLLICSL) threads the bilayer. The Cytoplasmic segment spans residues 203-229 (CKHLKKMQLHGKGSQDPSTKVHIKALQ). Residues 230–250 (TVIFFLLLCAVYFLSIMISVW) form a helical membrane-spanning segment. The Extracellular portion of the chain corresponds to 251–259 (SFGSLENKP). The chain crosses the membrane as a helical span at residues 260-280 (VFMFCKAIRFSYPSIHPFILI). Topologically, residues 281-309 (WGNKKLKQTFLSVLRQVRYWVKGEKPSSP) are cytoplasmic.

The protein belongs to the G-protein coupled receptor T2R family. In terms of tissue distribution, expressed in subsets of taste receptor cells of the tongue and exclusively in gustducin-positive cells.

It localises to the membrane. Receptor that may play a role in the perception of bitterness and is gustducin-linked. May play a role in sensing the chemical composition of the gastrointestinal content. The activity of this receptor may stimulate alpha gustducin, mediate PLC-beta-2 activation and lead to the gating of TRPM5. Activated by the sulfonyl amide sweeteners saccharin and acesulfame K. The sequence is that of Taste receptor type 2 member 31 (TAS2R31) from Homo sapiens (Human).